Reading from the N-terminus, the 2002-residue chain is Methylcytosine dioxygenase TET2 (2002 aa).

Residues Met1 to Gly11 show a composition bias toward basic and acidic residues. Residues Met1–Pro22 form a disordered region. Phosphoserine is present on residues Ser15, Ser75, and Ser99. A compositionally biased stretch (basic and acidic residues) spans Lys113 to Asn124. 7 disordered regions span residues Lys113–Val154, His266–Lys287, Gly349–Glu368, Asp390–Asn488, Leu703–Leu748, Val930–His949, and Asp1075–Arg1095. Composition is skewed to polar residues over residues Gly126–Asp143 and Pro267–Glu283. The span at Thr397–Pro416 shows a compositional bias: pro residues. Polar residues-rich tracts occupy residues Arg479 to Asn488 and Leu703 to Leu718. Residues Gln731–Leu748 are compositionally biased toward low complexity. Polar residues-rich tracts occupy residues Gly935–Lys944 and Leu1081–Arg1095. Phosphoserine occurs at positions 1107 and 1109. Residues Cys1133, Cys1135, Cys1193, His1219, and Cys1221 each coordinate Zn(2+). Arg1261 is a 2-oxoglutarate binding site. The Zn(2+) site is built by Cys1271, Cys1273, Cys1289, and Cys1298. Positions Ser1290–Ser1303 are interaction with DNA. A Glycyl lysine isopeptide (Lys-Gly) (interchain with G-Cter in ubiquitin) cross-link involves residue Lys1299. Cys1358 contributes to the Zn(2+) binding site. Residue Cys1374 participates in 2-oxoglutarate binding. His1380 contacts Zn(2+). Fe cation is bound by residues His1382 and Asp1384. Residue Asn1387 coordinates substrate. A 2-oxoglutarate-binding site is contributed by His1416. Disordered regions lie at residues Ala1475 to Gln1507 and Val1521 to Asp1587. Over residues Glu1477–Asn1487 the composition is skewed to low complexity. Residues Pro1496–Gln1507 are compositionally biased toward polar residues. Composition is skewed to low complexity over residues Gln1523–Gln1532 and Gln1539–His1551. Residues Thr1554–Pro1568 show a composition bias toward polar residues. Position 1682 is an asymmetric dimethylarginine (Arg1682). His1881 lines the Fe cation pocket. Residue Arg1896–Ser1898 coordinates 2-oxoglutarate. Position 1902 to 1904 (Tyr1902 to His1904) interacts with substrate. His1912 provides a ligand contact to Zn(2+). Positions Cys1932–Glu1961 are disordered. Positions Arg1951–Ser1960 are enriched in basic and acidic residues.

It belongs to the TET family. In terms of assembly, interacts with HCFC1. Interacts with OGT. Interacts with PROSER1; this interaction mediates TET2 O-GlcNAcylation and stability by promoting the interaction between OGT and TET2. Directly interacts (via C-terminus) with the DCAF1 component of the CRL4(VprBP) E3 ubiquitin-protein ligase complex. The cofactor is Fe(2+). Requires Zn(2+) as cofactor. In terms of processing, may be glycosylated. It is unclear whether interaction with OGT leads to GlcNAcylation. According to a report, it is not GlcNAcylated by OGT. In contrast, another group reports GlcNAcylation by OGT in mouse ortholog. Monoubiquitinated at Lys-1299 by the DCX (DDB1-CUL4-X-box) E3 ubiquitin-protein ligase complex called CRL4(VprBP) or CUL4A-RBX1-DDB1-DCAF1/VPRBP complex; this modification promotes binding to DNA. Post-translationally, acetylated. Deacetylase HDAC6 acts as a valine sensor by binding to valine through its primate-specific SE14 repeat region and deacetylates TET2 following valine deprivation which promotes TET2-dependent DNA demethylation. In terms of tissue distribution, broadly expressed. Highly expressed in hematopoietic cells; highest expression observed in granulocytes. Expression is reduced in granulocytes from peripheral blood of patients affected by myelodysplastic syndromes.

The protein localises to the nucleus. It is found in the chromosome. It carries out the reaction a 5-methyl-2'-deoxycytidine in DNA + 2-oxoglutarate + O2 = a 5-hydroxymethyl-2'-deoxycytidine in DNA + succinate + CO2. The catalysed reaction is a 5-hydroxymethyl-2'-deoxycytidine in DNA + 2-oxoglutarate + O2 = a 5-formyl-2'-deoxycytidine in DNA + succinate + CO2 + H2O. The enzyme catalyses a 5-formyl-2'-deoxycytidine in DNA + 2-oxoglutarate + O2 = a 5-carboxyl-2'-deoxycytidine in DNA + succinate + CO2 + H(+). In terms of biological role, dioxygenase that catalyzes the conversion of the modified genomic base 5-methylcytosine (5mC) into 5-hydroxymethylcytosine (5hmC) and plays a key role in active DNA demethylation. Has a preference for 5-hydroxymethylcytosine in CpG motifs. Also mediates subsequent conversion of 5hmC into 5-formylcytosine (5fC), and conversion of 5fC to 5-carboxylcytosine (5caC). Conversion of 5mC into 5hmC, 5fC and 5caC probably constitutes the first step in cytosine demethylation. Methylation at the C5 position of cytosine bases is an epigenetic modification of the mammalian genome which plays an important role in transcriptional regulation. In addition to its role in DNA demethylation, also involved in the recruitment of the O-GlcNAc transferase OGT to CpG-rich transcription start sites of active genes, thereby promoting histone H2B GlcNAcylation by OGT. The protein is Methylcytosine dioxygenase TET2 (TET2) of Homo sapiens (Human).